Reading from the N-terminus, the 63-residue chain is Large ribosomal subunit protein bL32 (63 aa).

The segment at Met1–Ala27 is disordered. The segment covering Lys7 to Ala18 has biased composition (basic residues).

The protein belongs to the bacterial ribosomal protein bL32 family.

In Pelodictyon phaeoclathratiforme (strain DSM 5477 / BU-1), this protein is Large ribosomal subunit protein bL32.